A 117-amino-acid polypeptide reads, in one-letter code: Peptidyl-tRNA hydrolase (117 aa).

Belongs to the PTH2 family.

It is found in the cytoplasm. It catalyses the reaction an N-acyl-L-alpha-aminoacyl-tRNA + H2O = an N-acyl-L-amino acid + a tRNA + H(+). Functionally, the natural substrate for this enzyme may be peptidyl-tRNAs which drop off the ribosome during protein synthesis. In Metallosphaera sedula (strain ATCC 51363 / DSM 5348 / JCM 9185 / NBRC 15509 / TH2), this protein is Peptidyl-tRNA hydrolase.